The chain runs to 463 residues: A-type ATP synthase subunit B (463 aa).

Belongs to the ATPase alpha/beta chains family. Has multiple subunits with at least A(3), B(3), C, D, E, F, H, I and proteolipid K(x).

It is found in the cell membrane. In terms of biological role, component of the A-type ATP synthase that produces ATP from ADP in the presence of a proton gradient across the membrane. The B chain is a regulatory subunit. The chain is A-type ATP synthase subunit B from Thermococcus gammatolerans (strain DSM 15229 / JCM 11827 / EJ3).